Here is a 573-residue protein sequence, read N- to C-terminus: Chromosomal replication initiator protein DnaA (573 aa).

The interval 1 to 85 is domain I, interacts with DnaA modulators; the sequence is MSQNSSSLLE…TKVLSMRMGR (85 aa). Positions 85-231 are domain II; sequence RSFSLAVSVE…TPAHNPNREV (147 aa). The disordered stretch occupies residues 91 to 232; sequence VSVEPSRDGE…PAHNPNREVS (142 aa). The span at 116 to 169 shows a compositional bias: low complexity; it reads PYPGQGPQSPQGQQGQQGQHPVQQEVRAHAPAPHQQGQHQAAQHQPPANQAPGQ. The segment covering 178–191 has biased composition (polar residues); that stretch reads QASQSAGAWEQTHS. The segment covering 202-213 has biased composition (pro residues); sequence SPAPVEPPPQPA. The segment at 232 to 448 is domain III, AAA+ region; it reads SLNPKYTFEN…GALIRVSAYS (217 aa). Positions 276, 278, 279, and 280 each coordinate ATP. Residues 449-573 are domain IV, binds dsDNA; sequence SLINQPIDKE…TQLIKSRGRN (125 aa).

The protein belongs to the DnaA family. Oligomerizes as a right-handed, spiral filament on DNA at oriC.

Its subcellular location is the cytoplasm. Plays an essential role in the initiation and regulation of chromosomal replication. ATP-DnaA binds to the origin of replication (oriC) to initiate formation of the DNA replication initiation complex once per cell cycle. Binds the DnaA box (a 9 base pair repeat at the origin) and separates the double-stranded (ds)DNA. Forms a right-handed helical filament on oriC DNA; dsDNA binds to the exterior of the filament while single-stranded (ss)DNA is stabiized in the filament's interior. The ATP-DnaA-oriC complex binds and stabilizes one strand of the AT-rich DNA unwinding element (DUE), permitting loading of DNA polymerase. After initiation quickly degrades to an ADP-DnaA complex that is not apt for DNA replication. Binds acidic phospholipids. In Corynebacterium efficiens (strain DSM 44549 / YS-314 / AJ 12310 / JCM 11189 / NBRC 100395), this protein is Chromosomal replication initiator protein DnaA.